The sequence spans 646 residues: Threonine--tRNA ligase (646 aa).

Residues 1–61 form the TGS domain; that stretch reads MIKITFPDGN…NEDSNFEIVT (61 aa). Residues 242–540 form a catalytic region; the sequence is DHRKLGRELD…LIEVYKGAFP (299 aa). Residues C336, H387, and H517 each contribute to the Zn(2+) site.

The protein belongs to the class-II aminoacyl-tRNA synthetase family. Homodimer. Zn(2+) is required as a cofactor.

The protein resides in the cytoplasm. The enzyme catalyses tRNA(Thr) + L-threonine + ATP = L-threonyl-tRNA(Thr) + AMP + diphosphate + H(+). In terms of biological role, catalyzes the attachment of threonine to tRNA(Thr) in a two-step reaction: L-threonine is first activated by ATP to form Thr-AMP and then transferred to the acceptor end of tRNA(Thr). Also edits incorrectly charged L-seryl-tRNA(Thr). The polypeptide is Threonine--tRNA ligase (Lactococcus lactis subsp. lactis (strain IL1403) (Streptococcus lactis)).